The chain runs to 120 residues: Ribosome-binding factor A (120 aa).

The protein belongs to the RbfA family. In terms of assembly, monomer. Binds 30S ribosomal subunits, but not 50S ribosomal subunits or 70S ribosomes.

It localises to the cytoplasm. In terms of biological role, one of several proteins that assist in the late maturation steps of the functional core of the 30S ribosomal subunit. Associates with free 30S ribosomal subunits (but not with 30S subunits that are part of 70S ribosomes or polysomes). Required for efficient processing of 16S rRNA. May interact with the 5'-terminal helix region of 16S rRNA. This chain is Ribosome-binding factor A, found in Limosilactobacillus fermentum (strain NBRC 3956 / LMG 18251) (Lactobacillus fermentum).